Reading from the N-terminus, the 145-residue chain is Protein SprT-like (145 aa).

The 137-residue stretch at 4–140 folds into the SprT-like domain; sequence TNYVQEVSLA…VCGNCHGKLM (137 aa). Position 64 (histidine 64) interacts with Zn(2+). The active site involves glutamate 65. Histidine 68 is a Zn(2+) binding site.

It belongs to the SprT family. Zn(2+) serves as cofactor.

It is found in the cytoplasm. This is Protein SprT-like from Streptococcus pyogenes serotype M1.